Consider the following 659-residue polypeptide: MLTHKNNQGGRKKMQVSFVIRDAEEKRHRNGVNALQLDTINGRLYSAGRDAIIRVWNSMQNNSQEPYIQSMEHHNDWVNDIVLCCGGRNLISASCDTTVKVWNAHKGFCMSTLRTHRDYVQALAYAKDREQVASAGLDKAIFLWDINTLTALTASNNTVTTSSITGSKDSIYSLAMNPSGTVIVCGSTENTLRIWDPRTCNKIAKLKGHAENVKALVVSEDGQHVISGSSDGKIKQWSIGQQRCVQTISVHSEGVWALLMTDNFSHVISGSRDKKIIMTDLRNPTNSVLICEERAPVLSLCYNYDQTGVWATTWNSDIRCWKLNPSEKLSFEVACIKGGAAIKKYHVLNDKRFMLTKDSEMNVAIYDVLKVKKVEDLGKVDYEEEIKKRSQKVYVPNWFTVDLKTGMPTIVLGQDEVDCFAAWVSAEAGLPEHAESGTDPKVNYGSLLLQALLEYWKPPPPHHHLQGVGSDLDSNGCDGDIRGNEYFSVPKHTPIIFSEVGGRNVCRLLVKDAVGETESALLSETVPSWVTNVVIERTIPKFIKLPFYLLAHPSMLKQDRSKKERLIANEFIQCRKVCEHVLEKVLGADLPASTGNSNSSQNNSQSDANSEGSQVPAEERIELLCNDVICDPNMDLRTVRHFIWKQSSDLTFHYRTKSN.

WD repeat units lie at residues 27-66 (RHRN…SQEP), 73-112 (HHND…CMST), 115-154 (THRD…ALTA), 166-205 (GSKD…KIAK), 208-247 (GHAE…CVQT), 250-289 (VHSE…NSVL), 292-331 (EERA…KLSF), and 337-376 (KGGA…KVED). Residues 592 to 613 (ASTGNSNSSQNNSQSDANSEGS) are disordered. The segment covering 596–610 (NSNSSQNNSQSDANS) has biased composition (low complexity).

It belongs to the WD repeat WDR48 family. Catalytic component of the Usp12-46 deubiquitylase complex consisting of Usp12-46, Wdr20 and Uaf1; regulatory subunit that, together wtih Wdr20, stabilizes Usp12-46. The Usp12-46 deubiquitylase complex associates with arr/arrow; the interaction leads to deubiquitination and stabilization of arr/arrow.

Regulatory component of the Usp12-46 deubiquitylase complex. activates deubiquitination by increasing the catalytic turnover without increasing the affinity of deubiquitinating enzymes for the substrate. The complex deubiquitylates the wg/wingless-signaling receptor arr/arrow, which stabilizes the receptor and increases its concentration at the cell surface; this enhances the sensitivity of cells to wg/wingless-signal stimulation. This increases the amplitude and spatial range of the signaling response to the wg/wingless morphogen gradient, facilitating the precise concentration-dependent regulation of its target genes. Together with Wdr20 and Usp12-46 required for wg/wingless-mediated signaling in the wing imaginal disc and for wg/wingless-dependent regulation of intestinal stem cell proliferation. This Aedes aegypti (Yellowfever mosquito) protein is WD repeat-containing protein 48 homolog.